A 304-amino-acid polypeptide reads, in one-letter code: Non-specific ribonucleoside hydrolase RihC (304 aa).

Histidine 233 is a catalytic residue.

It belongs to the IUNH family. RihC subfamily.

Functionally, hydrolyzes both purine and pyrimidine ribonucleosides with a broad-substrate specificity. This is Non-specific ribonucleoside hydrolase RihC from Escherichia coli O6:H1 (strain CFT073 / ATCC 700928 / UPEC).